Reading from the N-terminus, the 220-residue chain is UPF0319 protein YccT (220 aa).

The N-terminal stretch at methionine 1–alanine 20 is a signal peptide.

Belongs to the UPF0319 family.

The protein is UPF0319 protein YccT of Escherichia coli (strain 55989 / EAEC).